A 435-amino-acid polypeptide reads, in one-letter code: GTPase Der (435 aa).

2 consecutive EngA-type G domains span residues 4–167 (PIVA…SPDA) and 175–350 (ISFS…ENKN). GTP-binding positions include 10 to 17 (GQPNVGKS), 57 to 61 (DTGGI), 119 to 122 (NKAD), 181 to 188 (GRPNVGKS), 228 to 232 (DTAGI), and 293 to 296 (NKWD). The 85-residue stretch at 351–435 (QRIQSSVLND…PIKILPRKRK (85 aa)) folds into the KH-like domain.

This sequence belongs to the TRAFAC class TrmE-Era-EngA-EngB-Septin-like GTPase superfamily. EngA (Der) GTPase family. Associates with the 50S ribosomal subunit.

GTPase that plays an essential role in the late steps of ribosome biogenesis. The chain is GTPase Der from Lactobacillus delbrueckii subsp. bulgaricus (strain ATCC 11842 / DSM 20081 / BCRC 10696 / JCM 1002 / NBRC 13953 / NCIMB 11778 / NCTC 12712 / WDCM 00102 / Lb 14).